The following is a 145-amino-acid chain: Mini-ribonuclease 3 (145 aa).

Aspartate 27 is an active-site residue.

It belongs to the MrnC RNase family. In terms of assembly, homodimer. Requires Mg(2+) as cofactor.

The protein localises to the cytoplasm. Its function is as follows. Involved in correct processing of both the 5' and 3' ends of 23S rRNA precursor. Processes 30S rRNA precursor transcript even in absence of ribonuclease 3 (Rnc); Rnc processes 30S rRNA into smaller rRNA precursors. In Kosmotoga olearia (strain ATCC BAA-1733 / DSM 21960 / TBF 19.5.1), this protein is Mini-ribonuclease 3.